The chain runs to 282 residues: Kallikrein-11 (282 aa).

The signal sequence occupies residues 1–50 (MQRLRWLRDWKSSGRGLTAAKEPGARSSPLQAMRILQLILLALATGLVGG). Residues 51–53 (ETR) constitute a propeptide, activation peptide. The Peptidase S1 domain maps to 53-280 (RIIKGFECKP…YVDWIQETMK (228 aa)). Disulfide bonds link cysteine 60/cysteine 195, cysteine 79/cysteine 95, cysteine 167/cysteine 269, cysteine 174/cysteine 241, cysteine 206/cysteine 220, and cysteine 231/cysteine 256. The Charge relay system role is filled by histidine 94. Asparagine 131 carries N-linked (GlcNAc...) asparagine glycosylation. Aspartate 142 acts as the Charge relay system in catalysis. Residues asparagine 197 and asparagine 213 are each glycosylated (N-linked (GlcNAc...) asparagine). The active-site Charge relay system is serine 235. An N-linked (GlcNAc...) asparagine glycan is attached at asparagine 242.

This sequence belongs to the peptidase S1 family. Kallikrein subfamily. In terms of processing, about 40% of KLK11 is inactivated by internal cleavage after Arg-188. This proteolytic inactivation may be effected by plasminogen. As to expression, expressed in brain, skin and prostate. Isoform 1 is expressed preferentially in brain. Isoform 2 is expressed in prostate. Present in seminal plasma at concentrations ranging from 2 to 37 microg/mL (at protein level).

The protein resides in the secreted. The protein localises to the golgi apparatus. Functionally, possible multifunctional protease. Efficiently cleaves 'bz-Phe-Arg-4-methylcoumaryl-7-amide', a kallikrein substrate, and weakly cleaves other substrates for kallikrein and trypsin. Cleaves synthetic peptides after arginine but not lysine residues. The sequence is that of Kallikrein-11 (KLK11) from Homo sapiens (Human).